The primary structure comprises 88 residues: Small ribosomal subunit protein bS20 (88 aa).

Positions Met-1–Arg-25 are disordered. Basic and acidic residues predominate over residues Arg-12 to Lys-22.

This sequence belongs to the bacterial ribosomal protein bS20 family.

Binds directly to 16S ribosomal RNA. This is Small ribosomal subunit protein bS20 from Dinoroseobacter shibae (strain DSM 16493 / NCIMB 14021 / DFL 12).